The following is a 258-amino-acid chain: Ribosomal RNA small subunit methyltransferase A (258 aa).

Residues His-9, Leu-11, Gly-36, Glu-57, Asp-83, and Asn-102 each coordinate S-adenosyl-L-methionine.

This sequence belongs to the class I-like SAM-binding methyltransferase superfamily. rRNA adenine N(6)-methyltransferase family. RsmA subfamily.

It is found in the cytoplasm. It carries out the reaction adenosine(1518)/adenosine(1519) in 16S rRNA + 4 S-adenosyl-L-methionine = N(6)-dimethyladenosine(1518)/N(6)-dimethyladenosine(1519) in 16S rRNA + 4 S-adenosyl-L-homocysteine + 4 H(+). Specifically dimethylates two adjacent adenosines (A1518 and A1519) in the loop of a conserved hairpin near the 3'-end of 16S rRNA in the 30S particle. May play a critical role in biogenesis of 30S subunits. The polypeptide is Ribosomal RNA small subunit methyltransferase A (Caulobacter vibrioides (strain ATCC 19089 / CIP 103742 / CB 15) (Caulobacter crescentus)).